We begin with the raw amino-acid sequence, 709 residues long: MVKRTGNGTDAIDGSRKRGRKDLRSIRRARNDKEPVEEPEIPVASEEDGELSEDSEEDATNEVQEQEDSKEKAYGALLTILKSEHPEDRQRERRKKKQDLQDPSSSDDELSEDEKGEVEANLVDTPGEEEPQSEEELSEGDEDESEDERDPFESHFNMQSESIDSLDEAWKQKKIVNKSGKIRVDDDESLIYTKTLAGKGQEFELPSHKGHLSSYPLKRKLKIQNNLLESQDDVLTPLQRKIVDPIFQYRDLLYEYEDYEQDEDEYRDLYVLHVLNHIYKTRDRILKDNQRLATNPDGEFLDQGFTRPKVLIVAPTRDTAYQIVSKVIEKSGLDQVDKKSKLRDQFFEDVLPPSSKPKSFRHTFKGNTNDFFVLGVKFTRKAIRLYSNFYQSDLIVCSPLGLQLILENTDRKKRQDDFLSSIELMIIDQLNSIEFQNVSHLFTIFAHMNKIPKEQHDTDFGRVRMWYINEQAKLLRQTLIFTRYVTPTANFLLNGKCRNIGGRWKNHHQITGEQSSVSKLGFRVRQIFQRVDLGGASVVDEPDYRFRFFTSVIVPSITKSTGYEDGILLYIPDYADFIRVRNYLKDKTTILFGDINEYSDVRQLTSTRSLFQQGRIKVLLYTERLHHFRRYEIKGVKSVIFYQPPSNPEFYNEVVRYIGKSAFLGDTDLNISTVRCVYSKLDGLALERIVSSKRAAVLTHGQNEIYEFK.

Residues 1 to 156 (MVKRTGNGTD…DERDPFESHF (156 aa)) form a disordered region. Residues 22–36 (DLRSIRRARNDKEPV) show a composition bias toward basic and acidic residues. Positions 37 to 66 (EEPEIPVASEEDGELSEDSEEDATNEVQEQ) are enriched in acidic residues. Residues 82–91 (KSEHPEDRQR) show a composition bias toward basic and acidic residues. Acidic residues-rich tracts occupy residues 105-116 (SSDDELSEDEKG) and 126-150 (PGEE…DERD).

The protein belongs to the UTP25 family. Component of the ribosomal small subunit (SSU) processome composed of at least 40 protein subunits and snoRNA U3.

The protein localises to the nucleus. Its subcellular location is the nucleolus. DEAD-box RNA helicase-like protein required for pre-18S rRNA processing, specifically at sites A0, A1, and A2. The chain is U3 small nucleolar RNA-associated protein 25 (UTP25) from Zygosaccharomyces rouxii (strain ATCC 2623 / CBS 732 / NBRC 1130 / NCYC 568 / NRRL Y-229).